A 424-amino-acid chain; its full sequence is Arogenate dehydratase 4, chloroplastic (424 aa).

The N-terminal 34 residues, 1–34 (MQAATSCDLKFRSTDPTSRNKCFSHAIPKRVAVT), are a transit peptide targeting the chloroplast. One can recognise a Prephenate dehydratase domain in the interval 126-303 (RVAYQGVPGA…NVTRFLMLAR (178 aa)). In terms of domain architecture, ACT spans 319–410 (VFAAQEHKGT…SFLRVLGSYP (92 aa)).

Expressed in roots, leaves, stems, flowers and siliques. More abundant in stems and roots.

It localises to the plastid. The protein resides in the chloroplast stroma. It catalyses the reaction L-arogenate + H(+) = L-phenylalanine + CO2 + H2O. It participates in amino-acid biosynthesis; L-phenylalanine biosynthesis; L-phenylalanine from L-arogenate: step 1/1. In terms of biological role, converts the prephenate produced from the shikimate-chorismate pathway into phenylalanine. The sequence is that of Arogenate dehydratase 4, chloroplastic from Arabidopsis thaliana (Mouse-ear cress).